Consider the following 1169-residue polypeptide: MENEEPVLSAPDVQVVDPDVRAHVYSLVTALGGFNGEDADKYVLGDDALACLRDIKRWLKLYDEKHNRMDVARCLGEANLVNGDLLPILAVWANSKKQTKYMSRIALACLELLVPLTWPVELHGELTINHHRHIPYIQHVHVSYKRGLLSHASTSYLRTIIRVGIPSMAIPRSERTTRDEGILKLLLYLLRNIALITPNTRLAAEGDEEETSRSATINAFQDQDVFALLLTMCSNVGDDFTMQDVALLEILFHLIRGVSVEKLFMDDAQRTAKRTDELDDLLRQESSLRREYAKNAPTRHGRFGTMIWVKRDDAKYSTVSGQNVLKDGQATLQKMDETKKWNKPLIRRKPQDLTVHNDFSTPVHLNSTASNNLRMFVEEFLDSGFNPLLTHVRKAIEREADRVMDINTRQFLYTTAWFLEAERARRARQRKKHAESEKPAKELEPDSFGLVAGVLNQETFVFLNRAMQYALDNKDWEDLNAGMRCFTQILLTVQDMAQSPLEEDQEIAENIQNRIFYEETTHDRVLAVIRGYKDQPFGYLDACTELTHVFLRMLERYSKENLDMQVRSRRRARRKAKDVEGTGNDENDEENGSEDEDRLEAERVSKERKFDFRRFAAKFCNQKCVDTFVAFTKHYKELNTEQLKRAHRYFYRIAFKQELSVLLFRLDIINLFYRMIKGPGALDSSKPIFKEWEEFVRQIIRRLTKRLDQRPALFVELLFSKINATTFYLEYGHERQTVTRARKAPAELEIDPRQAHTIEEKISIMVPALVLDGEEDLVTWVSDVLESAVEEREAWETQEKALRDAGAENSKIPNPMISVKARDDACQQAMFSNAKLRLLMTLVKFERLGAEDVPGAAWIIPSAPRAQDLREMKSFIDKYFEKAKRGTLGRDPRELIRRKYGGGKTASDNQHNPDIQFGDDSEGEDEVPDGPLFPPNPRAAPNPANKPTKKKKRKERNPDDEDEDDSVDEETLEERRRARLENSRARLAKIKSDLYVHASDEDTDEEGDKEFFLLEEQRRREQAKRIKHALLTGMTEDGDGSTNKKGQRKRQTTRNRTGEAKSKRQRRGKQADEVDEDDDVVMGNMDAPSPMSDREGTPSGEEDDGFNFDDDLVFSRDREKLLGSAGNEEKDSNRPDKAMAQDEDDDDAPIVAANRRRMRAGFVVDSDSE.

Disordered regions lie at residues 573 to 600 (RRKA…DRLE) and 900 to 1150 (YGGG…DAPI). Composition is skewed to acidic residues over residues 583–599 (GNDE…EDRL) and 917–928 (FGDDSEGEDEVP). The segment covering 931 to 940 (PLFPPNPRAA) has biased composition (pro residues). A compositionally biased stretch (acidic residues) spans 958 to 972 (PDDEDEDDSVDEETL). 2 stretches are compositionally biased toward basic and acidic residues: residues 973–1000 (EERR…HASD) and 1009–1024 (KEFF…EQAK). A compositionally biased stretch (acidic residues) spans 1100-1112 (GEEDDGFNFDDDL). The segment covering 1113–1140 (VFSRDREKLLGSAGNEEKDSNRPDKAMA) has biased composition (basic and acidic residues).

Belongs to the timeless family.

It is found in the nucleus. Its function is as follows. Involved in chromosome segregation during meiosis and DNA damage repair. This Aspergillus niger (strain ATCC MYA-4892 / CBS 513.88 / FGSC A1513) protein is Topoisomerase 1-associated factor 1 (tof1).